A 536-amino-acid polypeptide reads, in one-letter code: Proto-oncogene tyrosine-protein kinase Yrk (536 aa).

A lipid anchor (N-myristoyl glycine) is attached at glycine 2. Residues cysteine 3 and cysteine 6 are each lipidated (S-palmitoyl cysteine). A disordered region spans residues 10 to 36 (ISGKGQGGSGTGTPAHPPSQYDPDPTQ). One can recognise an SH3 domain in the interval 81-142 (GGVTLFIALY…PSNYVAPVDS (62 aa)). Residues 148-245 (WYFGKIGRKD…GLCCRLAVPC (98 aa)) enclose the SH2 domain. The 254-residue stretch at 270-523 (LQLLQKLGNG…YLQSFLEDYF (254 aa)) folds into the Protein kinase domain. ATP contacts are provided by residues 276–284 (LGNGQFGEV) and lysine 298. The active-site Proton acceptor is aspartate 389. Tyrosine 419 bears the Phosphotyrosine; by autocatalysis mark. A Phosphotyrosine modification is found at tyrosine 530.

The protein belongs to the protein kinase superfamily. Tyr protein kinase family. SRC subfamily. Post-translationally, phosphorylated. There are elevated levels of this protein in neural and hematopoietic tissues.

The catalysed reaction is L-tyrosyl-[protein] + ATP = O-phospho-L-tyrosyl-[protein] + ADP + H(+). Functionally, may participate in signaling pathways. This Gallus gallus (Chicken) protein is Proto-oncogene tyrosine-protein kinase Yrk (YRK).